The primary structure comprises 107 residues: Essential MCU regulator, mitochondrial (107 aa).

Residues 1–52 (MASGAARWLVLAPVRSGALRSGPSLRKDGDVSAAWSGSGRSLVPSRSVIVTR) constitute a mitochondrion transit peptide. An interaction with MAIP1 region spans residues 1 to 52 (MASGAARWLVLAPVRSGALRSGPSLRKDGDVSAAWSGSGRSLVPSRSVIVTR). Topologically, residues 54-65 (GAILPKPVKMSF) are mitochondrial matrix. A helical membrane pass occupies residues 66–85 (GLLRVFSIVIPFLYVGTLIS). The GXXXX[G/A/S] signature appears at 81 to 85 (GTLIS). Residues 86–107 (KNFAALLEEHDIFVPEDDDDDD) lie on the Mitochondrial intermembrane side of the membrane.

The protein belongs to the SMDT1/EMRE family. In terms of assembly, component of the uniplex complex, composed of MCU, EMRE/SMDT1, MICU1 and MICU2 (or MICU3) in a 4:4:1:1 stoichiometry. The number of EMRE/SMDT1 molecules is hovewer variable, ranging from 1 to 4 copies per uniplex complex, leading to uniplex complexes with distinct gatekeeping profiles. Interacts (via its C-terminal poly-Asp tail) with MCUR1; the interaction is direct. Unprocessed form interacts (via transit peptide) with MAIP1. Post-translationally, undergoes proteolytic degradation in neurons: degraded by AFG3L2 and SPG7 before SMDT1/EMRE assembly with the uniporter complex, limiting the availability of SMDT1/EMRE for MCU assembly and promoting efficient assembly of gatekeeper subunits with MCU.

The protein localises to the mitochondrion inner membrane. Essential regulatory subunit of the mitochondrial calcium uniporter complex (uniplex), a complex that mediates calcium uptake into mitochondria. Required to bridge the calcium-sensing proteins MICU1 with the calcium-conducting subunit MCU. Acts by mediating activation of MCU and retention of MICU1 to the MCU pore, in order to ensure tight regulation of the uniplex complex and appropriate responses to intracellular calcium signaling. The protein is Essential MCU regulator, mitochondrial of Homo sapiens (Human).